We begin with the raw amino-acid sequence, 601 residues long: MVLTSSYSVEGKPASLGPWGGQSGHAWDDGMYTTVKQIIIAHGSGIDSIQIEYDKNGSSVWSEKRGGKGGKKFDKVKFDYPHEYLISVNGTYGSFDVWGTICVRSLTFESNRRKYGPFGVDSGTFFALPKSGSKIIGFHGKAGWYLDAIGVHTQPIPKENNPSSKILLHSHQSFSQGDKKHEYSVLQGSVGQNFDIVVTLRKKDPTLPSFESRDSAGAEVTKHKLVTDTEKSQSKIEGGAKTYGPWGGTGGIMFDDGIYTGIRQINLSRNVGIVSMKVCYDFRGQAVWGSKHGGVGGFKHDKIVFDYPSEVLTHVTGTYGPLMYMGPNVIKSLTFRTNRGKHGPYGEEQGPSFTHQMDEGKVVGFLGREGLFLDSIGVHVMECKISSLKPSSPHNAIVPHNNSGTAQIENSPWANKLVLAANGHGEEVDRGVVKEPTPSGPGPWGGDGGQAWDDGVFSGIKQIFVTRGNDAITSIQIEYDRNGQSVWSIKHGGDSNGVATHRIKFEYPDESITCISGYYGPLNNSDRYNVVKSLSFYTSRGRYGPYGEETGTFFTSTTTQGKVLGFHGRSSFHLDAIGVHMQHWLGNNKSYYSRASCFKLF.

Jacalin-type lectin domains follow at residues 13–155 (PASL…HTQP), 240–382 (AKTY…HVME), and 438–583 (PSGP…HMQH).

Belongs to the jacalin lectin family.

The protein is Jacalin-related lectin 3 (JAL3) of Arabidopsis thaliana (Mouse-ear cress).